The primary structure comprises 314 residues: uncharacterized protein (314 aa).

This is an uncharacterized protein from Acanthamoeba polyphaga mimivirus (APMV).